The primary structure comprises 436 residues: Trigger factor (436 aa).

A PPIase FKBP-type domain is found at 163-248 (TDRVIIDFAG…VKNVAEAILP (86 aa)).

The protein belongs to the FKBP-type PPIase family. Tig subfamily.

It localises to the cytoplasm. It carries out the reaction [protein]-peptidylproline (omega=180) = [protein]-peptidylproline (omega=0). Involved in protein export. Acts as a chaperone by maintaining the newly synthesized protein in an open conformation. Functions as a peptidyl-prolyl cis-trans isomerase. This Laribacter hongkongensis (strain HLHK9) protein is Trigger factor.